Here is a 257-residue protein sequence, read N- to C-terminus: Proteasome assembly chaperone 1 (257 aa).

Belongs to the PSMG1 family. Forms a heterodimer with psmg2.

Chaperone protein which promotes assembly of the 20S proteasome as part of a heterodimer with psmg2. In Nematostella vectensis (Starlet sea anemone), this protein is Proteasome assembly chaperone 1 (psmg1).